Reading from the N-terminus, the 79-residue chain is Large ribosomal subunit protein bL28 (79 aa).

Belongs to the bacterial ribosomal protein bL28 family.

The protein is Large ribosomal subunit protein bL28 of Christiangramia forsetii (strain DSM 17595 / CGMCC 1.15422 / KT0803) (Gramella forsetii).